Here is a 1066-residue protein sequence, read N- to C-terminus: Isoleucine--tRNA ligase (1066 aa).

Positions 49–59 match the 'HIGH' region motif; that stretch reads PYVSGAIHLGT. Residues 625 to 629 carry the 'KMSKS' region motif; the sequence is KMSKS. Lysine 628 is an ATP binding site.

The protein belongs to the class-I aminoacyl-tRNA synthetase family. IleS type 2 subfamily. Monomer. Requires Zn(2+) as cofactor.

It localises to the cytoplasm. It catalyses the reaction tRNA(Ile) + L-isoleucine + ATP = L-isoleucyl-tRNA(Ile) + AMP + diphosphate. In terms of biological role, catalyzes the attachment of isoleucine to tRNA(Ile). As IleRS can inadvertently accommodate and process structurally similar amino acids such as valine, to avoid such errors it has two additional distinct tRNA(Ile)-dependent editing activities. One activity is designated as 'pretransfer' editing and involves the hydrolysis of activated Val-AMP. The other activity is designated 'posttransfer' editing and involves deacylation of mischarged Val-tRNA(Ile). The protein is Isoleucine--tRNA ligase of Pyrococcus horikoshii (strain ATCC 700860 / DSM 12428 / JCM 9974 / NBRC 100139 / OT-3).